We begin with the raw amino-acid sequence, 184 residues long: uncharacterized protein (184 aa).

Residues 130–149 (DKDDDKKKKKKDDKKDDPCN) form a disordered region.

The protein localises to the virion. This is an uncharacterized protein from Acanthamoeba polyphaga (Amoeba).